A 558-amino-acid polypeptide reads, in one-letter code: Polysialic acid transport protein KpsD (558 aa).

Positions 1 to 20 (MKLFKSILLIAACHAAQASA) are cleaved as a signal peptide.

It to E.coli K1 KpsD.

It is found in the periplasm. Involved in the translocation of the polysialic acid capsule across the outer membrane to the cell surface. May function as the periplasmic binding element of the PSA transport system, in which it transiently interacts with the membrane component of the transporter, binds polysaccharide and transports the polymer to a component in the outer membrane. The sequence is that of Polysialic acid transport protein KpsD (kpsD) from Escherichia coli.